A 117-amino-acid chain; its full sequence is Ribosome-binding factor A (117 aa).

This sequence belongs to the RbfA family. As to quaternary structure, monomer. Binds 30S ribosomal subunits, but not 50S ribosomal subunits or 70S ribosomes.

The protein resides in the cytoplasm. In terms of biological role, one of several proteins that assist in the late maturation steps of the functional core of the 30S ribosomal subunit. Associates with free 30S ribosomal subunits (but not with 30S subunits that are part of 70S ribosomes or polysomes). Required for efficient processing of 16S rRNA. May interact with the 5'-terminal helix region of 16S rRNA. This is Ribosome-binding factor A from Anaplasma marginale (strain St. Maries).